A 622-amino-acid polypeptide reads, in one-letter code: Microtubule-associated protein 70-1 (622 aa).

Residues 1 to 27 form a disordered region; that stretch reads MSDVSADGGFLSAEQATTPVAIPTPYP. The stretch at 66-365 forms a coiled coil; that stretch reads DPVKVELNRL…LAISDRAAKS (300 aa). The tract at residues 250–483 is required for targeting to microtubules; the sequence is ILDRMHRQKV…YSFNKACDET (234 aa). 2 disordered regions span residues 388 to 512 and 579 to 622; these read SSIS…TEDN and AAMR…RSTQ. Composition is skewed to polar residues over residues 400–425 and 432–453; these read SMSN…SNGF and MRNS…TSKS. Basic and acidic residues-rich tracts occupy residues 479–501 and 579–591; these read ACDE…EKPP and AAMR…DNRA. Positions 541 to 590 form a coiled coil; it reads DKDDAIEMLAKKVETLTKAMEVEAKKMRREVAAMEKEVAAMRVDKDQDNR. The segment covering 594–605 has biased composition (polar residues); that stretch reads SSNTKPSSNTAQ.

The protein belongs to the MAP70 family. Interacts with MAP70.5 and itself.

It localises to the cytoplasm. Its subcellular location is the cytoskeleton. The protein resides in the phragmoplast. It is found in the spindle. Plant-specific protein that interact with microtubules. In association with MAP70.5, is essential for the normal banding pattern of secondary cell wall and for the proper development of xylem tracheary elements and wood formation. The polypeptide is Microtubule-associated protein 70-1 (MAP70.1) (Arabidopsis thaliana (Mouse-ear cress)).